We begin with the raw amino-acid sequence, 505 residues long: Ribosomal RNA small subunit methyltransferase F (505 aa).

S-adenosyl-L-methionine is bound by residues 123 to 129, Glu-147, Asp-174, and Asp-192; that span reads ASAPGSK. The active-site Nucleophile is Cys-245. The segment at 409-437 is disordered; sequence GTNANNNSNTNPNNNANTNPNNNSNTNPR. Low complexity predominate over residues 410–435; sequence TNANNNSNTNPNNNANTNPNNNSNTN.

It belongs to the class I-like SAM-binding methyltransferase superfamily. RsmB/NOP family.

It is found in the cytoplasm. It catalyses the reaction cytidine(1407) in 16S rRNA + S-adenosyl-L-methionine = 5-methylcytidine(1407) in 16S rRNA + S-adenosyl-L-homocysteine + H(+). Functionally, specifically methylates the cytosine at position 1407 (m5C1407) of 16S rRNA. The protein is Ribosomal RNA small subunit methyltransferase F of Shewanella denitrificans (strain OS217 / ATCC BAA-1090 / DSM 15013).